We begin with the raw amino-acid sequence, 207 residues long: MSETSLLIPKTNSPASSENMANTNKSLTGLESLIKLLPTGTLFIYLLLNPVLTNDGECSTGNKVMSSILVALCSFSCVFSCFTDSFKGVDGSRKFGIVTKKGLWTYAEPGSVDLSKYKLRIADFVHAGFVLAVFGTLVLLDANTASCFYPRFRETQKTLVMALPPAVGVASATIFALFPSKRSGIGYAPIAEEVGAEEETKKASVSA.

Residues 1–20 (MSETSLLIPKTNSPASSENM) are disordered. A run of 4 helical transmembrane segments spans residues 33–53 (LIKLLPTGTLFIYLLLNPVLT), 64–84 (VMSSILVALCSFSCVFSCFTD), 121–141 (IADFVHAGFVLAVFGTLVLLD), and 159–179 (LVMALPPAVGVASATIFALFP).

It belongs to the plant DMP1 protein family. Expressed in leaves, siliques and roots.

It localises to the endoplasmic reticulum membrane. It is found in the vacuole membrane. Its function is as follows. Involved in membrane remodeling including fission during breakdown of the endoplasmic reticulum (ER) and the tonoplast during leaf senescence and in membrane fusion during vacuole biogenesis in roots. This chain is Protein DMP1, found in Arabidopsis thaliana (Mouse-ear cress).